We begin with the raw amino-acid sequence, 61 residues long: Small ribosomal subunit protein bS21 (61 aa).

This sequence belongs to the bacterial ribosomal protein bS21 family.

In Leuconostoc mesenteroides subsp. mesenteroides (strain ATCC 8293 / DSM 20343 / BCRC 11652 / CCM 1803 / JCM 6124 / NCDO 523 / NBRC 100496 / NCIMB 8023 / NCTC 12954 / NRRL B-1118 / 37Y), this protein is Small ribosomal subunit protein bS21.